The primary structure comprises 790 residues: MSRRRHSDENDGGQPHKRRKTSDANETEDHLESLICKVGEKSACSLESNLEGLAGVLEADLPNYKSKILRLLCTVARLLPEKLTIYTTLVGLLNARNYNFGGEFVEAMIRQLKESLKANNYNEAVYLVRFLSDLVNCHVIAAPSMVAMFENFVSVTQEEDVPQVRRDWYVYAFLSSLPWVGKELYEKKDAEMDRIFANTESYLKRRQKTHVPMLQVWTADKPHPQEEYLDCLWAQIQKLKKDRWQERHILRPYLAFDSILCEALQHNLPPFTPPPHTEDSVYPMPRVIFRMFDYTDDPEGPVMPGSHSVERFVIEENLHCIIKSHWKERKTCAAQLVSYPGKNKIPLNYHIVEVIFAELFQLPAPPHIDVMYTTLLIELCKLQPGSLPQVLAQATEMLYMRLDTMNTTCVDRFINWFSHHLSNFQFRWSWEDWSDCLSQDPESPKPKFVREVLEKCMRLSYHQRILDIVPPTFSALCPANPTCIYKYGDESSNSLPGHSVALCLAVAFKSKATNDEIFSILKDVPNPNQDDDDDEGFSFNPLKIEVFVQTLLHLAAKSFSHSFSALAKFHEVFKTLAESDEGKLHVLRVMFEVWRNHPQMIAVLVDKMIRTQIVDCAAVANWIFSSELSRDFTRLFVWEILHSTIRKMNKHVLKIQKELEEAKEKLARQHKRRSDDDDRSSDRKDGVLEEQIERLQEKVESAQSEQKNLFLVIFQRFIMILTEHLVRCETDGTSVLTPWYKNCIERLQQIFLQHHQIIQQYMVTLENLLFTAELDPHILAVFQQFCALQA.

The tract at residues 1-26 (MSRRRHSDENDGGQPHKRRKTSDANE) is disordered. The Nuclear localization signal signature appears at 3 to 20 (RRRHSDENDGGQPHKRRK). A Phosphoserine; by RPS6KB1 modification is found at S7. The residue at position 21 (T21) is a Phosphothreonine; by RPS6KB1. At S22 the chain carries Phosphoserine; by RPS6KB1. The region spanning 28 to 240 (EDHLESLICK…CLWAQIQKLK (213 aa)) is the MIF4G domain. S201 is modified (phosphoserine). K204 carries the N6-acetyllysine modification. Residues 643–713 (STIRKMNKHV…SEQKNLFLVI (71 aa)) are a coiled coil. K684 participates in a covalent cross-link: Glycyl lysine isopeptide (Lys-Gly) (interchain with G-Cter in SUMO2). Position 698 is an N6-acetyllysine (K698).

This sequence belongs to the NCBP1 family. In terms of assembly, component of the nuclear cap-binding complex (CBC), a heterodimer composed of NCBP1/CBP80 and NCBP2/CBP20 that interacts with m7GpppG-capped RNA. Found in a U snRNA export complex containing PHAX/RNUXA, NCBP1/CBP80, NCBP2/CBP20, RAN, XPO1 and m7G-capped RNA. Identified in a IGF2BP1-dependent mRNP granule complex containing untranslated mRNAs. Interacts with PHAX/RNUXA, SRRT/ARS2, EIF4G2, IGF2BP1, HNRNPF, HNRNPH1, KIAA0427/CTIF, PARN, DROSHA, UPF1 and ALYREF/THOC4. May interact with EIF4G1; the interaction is however controversial since it is reported by PubMed:11340157, PubMed:15059963 and PubMed:15361857, but is not observed by PubMed:19648179. The large PER complex involved in the repression of transcriptional termination is composed of at least PER2, CDK9, DDX5, DHX9, NCBP1/CBP80 and POLR2A. Component of an alternative nuclear cap-binding complex (CBC) composed of NCBP1/CBP80 and NCBP3. Interacts with METTL3. Interacts with ZFC3H1 in a RNase-insensitive manner. Interacts with MTREX. Interacts with TASOR. Interacts with DHX34; the interaction is RNA-dependent. Interacts with KPNA3. Post-translationally, dephosphorylated at Thr-21 by the PNUTS-PP1 complex during RNA polymerase II transcription pause-release.

The protein resides in the nucleus. Its subcellular location is the cytoplasm. Component of the cap-binding complex (CBC), which binds cotranscriptionally to the 5'-cap of pre-mRNAs and is involved in various processes such as pre-mRNA splicing, translation regulation, nonsense-mediated mRNA decay, RNA-mediated gene silencing (RNAi) by microRNAs (miRNAs) and mRNA export. The CBC complex is involved in mRNA export from the nucleus via its interaction with ALYREF/THOC4/ALY, leading to the recruitment of the mRNA export machinery to the 5'-end of mRNA and to mRNA export in a 5' to 3' direction through the nuclear pore. The CBC complex is also involved in mediating U snRNA and intronless mRNAs export from the nucleus. The CBC complex is essential for a pioneer round of mRNA translation, before steady state translation when the CBC complex is replaced by cytoplasmic cap-binding protein eIF4E. The pioneer round of mRNA translation mediated by the CBC complex plays a central role in nonsense-mediated mRNA decay (NMD), NMD only taking place in mRNAs bound to the CBC complex, but not on eIF4E-bound mRNAs. The CBC complex enhances NMD in mRNAs containing at least one exon-junction complex (EJC) via its interaction with UPF1, promoting the interaction between UPF1 and UPF2. The CBC complex is also involved in 'failsafe' NMD, which is independent of the EJC complex, while it does not participate in Staufen-mediated mRNA decay (SMD). During cell proliferation, the CBC complex is also involved in microRNAs (miRNAs) biogenesis via its interaction with SRRT/ARS2 and is required for miRNA-mediated RNA interference. The CBC complex also acts as a negative regulator of PARN, thereby acting as an inhibitor of mRNA deadenylation. In the CBC complex, NCBP1/CBP80 does not bind directly capped RNAs (m7GpppG-capped RNA) but is required to stabilize the movement of the N-terminal loop of NCBP2/CBP20 and lock the CBC into a high affinity cap-binding state with the cap structure. Associates with NCBP3 to form an alternative cap-binding complex (CBC) which plays a key role in mRNA export and is particularly important in cellular stress situations such as virus infections. The conventional CBC with NCBP2 binds both small nuclear RNA (snRNA) and messenger (mRNA) and is involved in their export from the nucleus whereas the alternative CBC with NCBP3 does not bind snRNA and associates only with mRNA thereby playing a role only in mRNA export. NCBP1/CBP80 is required for cell growth and viability. This Homo sapiens (Human) protein is Nuclear cap-binding protein subunit 1 (NCBP1).